The chain runs to 870 residues: Leucine--tRNA ligase (870 aa).

Residues 42–52 (PYPSGKLHMGH) carry the 'HIGH' region motif. A 'KMSKS' region motif is present at residues 629–633 (KMSKS). Lys632 contributes to the ATP binding site.

The protein belongs to the class-I aminoacyl-tRNA synthetase family.

Its subcellular location is the cytoplasm. It catalyses the reaction tRNA(Leu) + L-leucine + ATP = L-leucyl-tRNA(Leu) + AMP + diphosphate. This is Leucine--tRNA ligase from Azotobacter vinelandii (strain DJ / ATCC BAA-1303).